Here is an 826-residue protein sequence, read N- to C-terminus: Periplasmic nitrate reductase (826 aa).

Residues Met-1–Ala-32 constitute a signal peptide (tat-type signal). The 4Fe-4S Mo/W bis-MGD-type domain maps to Ile-39–Asp-95. [4Fe-4S] cluster-binding residues include Cys-46, Cys-49, Cys-53, and Cys-81. Mo-bis(molybdopterin guanine dinucleotide) contacts are provided by residues Lys-83, Gln-150, Asn-175, Cys-179, Trp-212–Met-219, Gln-262–Asp-264, Met-372, Gln-376, Asn-482, Ser-508–Asp-509, Lys-531, Asp-558, and Thr-716–Thr-725. Substrate is bound at residue Phe-792. Residues Asn-800 and Lys-817 each contribute to the Mo-bis(molybdopterin guanine dinucleotide) site.

Belongs to the prokaryotic molybdopterin-containing oxidoreductase family. NasA/NapA/NarB subfamily. In terms of assembly, component of the periplasmic nitrate reductase NapAB complex composed of NapA and NapB. It depends on [4Fe-4S] cluster as a cofactor. Mo-bis(molybdopterin guanine dinucleotide) is required as a cofactor. Post-translationally, predicted to be exported by the Tat system. The position of the signal peptide cleavage has not been experimentally proven.

Its subcellular location is the periplasm. It catalyses the reaction 2 Fe(II)-[cytochrome] + nitrate + 2 H(+) = 2 Fe(III)-[cytochrome] + nitrite + H2O. Its function is as follows. Catalytic subunit of the periplasmic nitrate reductase complex NapAB. Receives electrons from NapB and catalyzes the reduction of nitrate to nitrite. This Shewanella halifaxensis (strain HAW-EB4) protein is Periplasmic nitrate reductase.